Here is a 427-residue protein sequence, read N- to C-terminus: 3-phosphoshikimate 1-carboxyvinyltransferase (427 aa).

Lys-23, Ser-24, and Arg-28 together coordinate 3-phosphoshikimate. Lys-23 is a phosphoenolpyruvate binding site. Gly-97 and Arg-125 together coordinate phosphoenolpyruvate. Positions 170, 171, 172, 198, 314, 337, and 341 each coordinate 3-phosphoshikimate. Gln-172 serves as a coordination point for phosphoenolpyruvate. Asp-314 acts as the Proton acceptor in catalysis. Phosphoenolpyruvate contacts are provided by Arg-345, Arg-387, and Lys-412.

This sequence belongs to the EPSP synthase family. Monomer.

It is found in the cytoplasm. It carries out the reaction 3-phosphoshikimate + phosphoenolpyruvate = 5-O-(1-carboxyvinyl)-3-phosphoshikimate + phosphate. It participates in metabolic intermediate biosynthesis; chorismate biosynthesis; chorismate from D-erythrose 4-phosphate and phosphoenolpyruvate: step 6/7. Its function is as follows. Catalyzes the transfer of the enolpyruvyl moiety of phosphoenolpyruvate (PEP) to the 5-hydroxyl of shikimate-3-phosphate (S3P) to produce enolpyruvyl shikimate-3-phosphate and inorganic phosphate. This is 3-phosphoshikimate 1-carboxyvinyltransferase from Buchnera aphidicola subsp. Acyrthosiphon pisum (strain Tuc7).